A 192-amino-acid chain; its full sequence is Ion-translocating oxidoreductase complex subunit B (192 aa).

Positions 1-26 (MSTIWIAIAALSALALAFGLVLGYAS) are hydrophobic. The region spanning 32–91 (ENDPIVEEVEAMLPQSQCGQCGYPGCRPYAEAVALNGENINKCGPGGEAMMLKLAEKLNV) is the 4Fe-4S domain. Cysteine 49, cysteine 52, cysteine 57, cysteine 74, cysteine 117, cysteine 120, cysteine 123, cysteine 127, cysteine 147, cysteine 150, cysteine 153, and cysteine 157 together coordinate [4Fe-4S] cluster. 2 4Fe-4S ferredoxin-type domains span residues 108–137 (QVAWIDESNCIGCTKCIQACPVDAIIGSTK) and 138–167 (AVHTVVSDLCTGCDLCVAPCPTDCIELRPI).

This sequence belongs to the 4Fe4S bacterial-type ferredoxin family. RnfB subfamily. The complex is composed of six subunits: RnfA, RnfB, RnfC, RnfD, RnfE and RnfG. [4Fe-4S] cluster serves as cofactor.

The protein localises to the cell inner membrane. In terms of biological role, part of a membrane-bound complex that couples electron transfer with translocation of ions across the membrane. The chain is Ion-translocating oxidoreductase complex subunit B from Pectobacterium carotovorum subsp. carotovorum (strain PC1).